The sequence spans 302 residues: Quinolinate synthase (302 aa).

The iminosuccinate site is built by H24 and S41. C86 provides a ligand contact to [4Fe-4S] cluster. Iminosuccinate contacts are provided by residues 112 to 114 (YVN) and S129. C173 is a [4Fe-4S] cluster binding site. Iminosuccinate is bound by residues 199–201 (HPE) and T216. C259 provides a ligand contact to [4Fe-4S] cluster.

The protein belongs to the quinolinate synthase family. Type 2 subfamily. It depends on [4Fe-4S] cluster as a cofactor.

It localises to the cytoplasm. It catalyses the reaction iminosuccinate + dihydroxyacetone phosphate = quinolinate + phosphate + 2 H2O + H(+). It participates in cofactor biosynthesis; NAD(+) biosynthesis; quinolinate from iminoaspartate: step 1/1. Functionally, catalyzes the condensation of iminoaspartate with dihydroxyacetone phosphate to form quinolinate. The protein is Quinolinate synthase of Thermococcus onnurineus (strain NA1).